The chain runs to 932 residues: MTNCLSFRNGRGLALLCALLGTLCETGSGQIRYSVSEELDKGSFVGNIANDLGLEPRELAERGVRIVSRGRTQLFSLNPQSGSLVTAERIDREELCAQIPLCLVKFNILVEDKLKIFEVEIEIKDINDNAPNFPTEELEIKIGELTVPGTRFPLKTAFDPDVGINSLQNYKLSPNDYFSLAVNSVSEGAKYPELVLERALDREKREIHQLVLVASDGGDPVHSGNLHIQVIVLDANDNPPMFTQPEYRVSVWENVPVGTRLLTVNATDPDEGFNAQVSYILDKMPGKIAEIFHLNSVSGEVSILKSLDYEDAMFYEIKIEAQDGPGLLSRAKILVTVLDVNDNAPEITITSLTSSVPEEGTVGREIALIDVHDRDSGQNGQVEVFVLGNLPFKLEKSVDQYYRLVTATSLDREQISEYNISLRASDGGSPPLSTETHITLHVIDINDNPPTFPHLSYSAYIPENNPRGASIFSVTAQDPDSNNNARITYALTEDTLQGAPLSSFVSINSNTGVLYALRSFDYEQFRDLKLLVTASDSGNPPLSSNVSLNLFVLDQNDNAPEILYPALPTDGSTGVELAPRSAEPGYLVTKVVAVDRDSGQNAWLSYRLLKASEPGLFSVGLHTGEVRTARALLDRDALKQSLVVAVQDHGQPPLSATVTLTVAVADRIPDILADLGSLEPSAKPNDSDLTLYLVVAVAAVSCVFLALVIVLLAHRLRRWHKSRLLQASGGGLASTPGSHFVGVDGVRAFLQTYSHEVSLTADSRKSHLIFPQPNYADTLISQESCEKSEPLLITQDLLEMKGDSNLLQQAPPNTDWRFSQAQRPGTSGSQNGDDTGTWPNNQFDTEMLQAMILASASEAADGSSTLGGGAGTMGLSARYGPQFTLQHVPDYRQNVYIPGSNATLTNAAGKRDGKAPAGGNGNKKKSGKKEKK.

The first 29 residues, 1–29 (MTNCLSFRNGRGLALLCALLGTLCETGSG), serve as a signal peptide directing secretion. 6 consecutive Cadherin domains span residues 30-133 (QIRY…APNF), 134-242 (PTEE…PPMF), 243-347 (TQPE…APEI), 348-452 (TITS…PPTF), 453-562 (PHLS…APEI), and 570-682 (DGST…EPSA). The Extracellular portion of the chain corresponds to 30 to 692 (QIRYSVSEEL…KPNDSDLTLY (663 aa)). 3 N-linked (GlcNAc...) asparagine glycosylation sites follow: asparagine 265, asparagine 419, and asparagine 545. N-linked (GlcNAc...) asparagine glycosylation occurs at asparagine 685. Residues 693–713 (LVVAVAAVSCVFLALVIVLLA) traverse the membrane as a helical segment. At 714–932 (HRLRRWHKSR…KKKSGKKEKK (219 aa)) the chain is on the cytoplasmic side. Disordered regions lie at residues 806–841 (LLQQAPPNTDWRFSQAQRPGTSGSQNGDDTGTWPNN) and 902–932 (ATLTNAAGKRDGKAPAGGNGNKKKSGKKEKK). Basic residues predominate over residues 922–932 (NKKKSGKKEKK).

The protein resides in the cell membrane. In terms of biological role, potential calcium-dependent cell-adhesion protein. May be involved in the establishment and maintenance of specific neuronal connections in the brain. This is Protocadherin gamma-A3 (PCDHGA3) from Pan troglodytes (Chimpanzee).